A 152-amino-acid chain; its full sequence is UPF0225 protein YchJ (152 aa).

The protein belongs to the UPF0225 family.

This Escherichia coli O7:K1 (strain IAI39 / ExPEC) protein is UPF0225 protein YchJ.